The chain runs to 1682 residues: Sodium channel protein type 7 subunit alpha (1682 aa).

Topologically, residues 1–117 are cytoplasmic; that stretch reads MLASPEPKGL…RRTTIKVLVH (117 aa). The stretch at 100–401 is one I repeat; the sequence is TLSPFNCIRR…ILAMAYEEEK (302 aa). A helical transmembrane segment spans residues 118 to 137; it reads PFFQLFILISVLIDCVFMSL. Topologically, residues 138 to 141 are extracellular; sequence TNLP. Residues 142-167 form a helical membrane-spanning segment; the sequence is KWRPVLENTLLGIYTFEILVKLFARG. The Cytoplasmic segment spans residues 168–178; it reads VWAGSFSFLGD. The helical transmembrane segment at 179–196 threads the bilayer; the sequence is PWNWLDFSVTVFEVIIRY. At 197-200 the chain is on the extracellular side; sequence SPLD. A helical membrane pass occupies residues 201–219; that stretch reads FIPTLQTARTLRILKIIPL. Residues 220–237 lie on the Cytoplasmic side of the membrane; it reads NQGLKSLVGVLIHCLKQL. Residues 238 to 259 traverse the membrane as a helical segment; that stretch reads IGVIILTLFFLSIFSLIGMGLF. Residues 260-338 lie on the Extracellular side of the membrane; the sequence is MGNLKHKCFR…PDQGFTNFDS (79 aa). Cysteine 267 and cysteine 307 are oxidised to a cystine. Residues asparagine 276, asparagine 281, and asparagine 309 are each glycosylated (N-linked (GlcNAc...) asparagine). Residues 339 to 366 constitute an intramembrane region (pore-forming); it reads FGWALFALFRLMAQDYPEVLYHQILYAS. A topological domain (extracellular) is located at residue glycine 367. Residues 368-407 traverse the membrane as a helical segment; the sequence is KVYMIFFVVVSFLFSFYMASLFLGILAMAYEEEKQRVGEI. Residues 408-505 are Cytoplasmic-facing; sequence SKKIEPKFQQ…EFVHRIIMAP (98 aa). Serine 442 carries the post-translational modification Phosphoserine; by PKA. One copy of the II repeat lies at 487–758; the sequence is CSPCWLKLKE…QLAVARIKKG (272 aa). Residues 506–521 traverse the membrane as a helical segment; it reads FTDLFLIICIILNVCF. The Extracellular segment spans residues 522-530; that stretch reads LTLEHYPMS. A helical membrane pass occupies residues 531–559; that stretch reads KQTNTLLNIGNLVFIGIFTAEMIFKIIAM. The Cytoplasmic portion of the chain corresponds to 560–568; that stretch reads HPYGYFQVG. A helical membrane pass occupies residues 569 to 586; that stretch reads WNIFDSMIVFHGLIELCL. At 587–592 the chain is on the extracellular side; it reads ANVAGM. The chain crosses the membrane as a helical span at residues 593–609; that stretch reads ALLRLFRMLRIFKLGKY. Over 610–626 the chain is Cytoplasmic; that stretch reads WPTFQILMWSLSNSWVA. Residues 627-655 traverse the membrane as a helical segment; sequence LKDLVLLLFTFIFFSAAFGMKLFGKNYEE. Over 656–673 the chain is Extracellular; sequence FVCHIDKDCQLPRWHMHD. 2 disulfide bridges follow: cysteine 658–cysteine 664 and cysteine 696–cysteine 705. Positions 674-700 form an intramembrane region, pore-forming; that stretch reads FFHSFLNVFRILCGEWVETLWDCMEVA. Residue glycine 701 is a topological domain, extracellular. Residues 702 to 732 traverse the membrane as a helical segment; that stretch reads QSWCIPFYLMVILIGNLLVLYLFLALVSSFS. Residues 733–934 lie on the Cytoplasmic side of the membrane; sequence SCKDVTAEEN…KTCCKIVENN (202 aa). Residue threonine 777 is modified to Phosphothreonine; by PKA. Positions 801–871 are disordered; it reads TQDFLKDKEK…SKEKIKQSSS (71 aa). Residues 804 to 819 show a composition bias toward basic and acidic residues; that stretch reads FLKDKEKSSGTEKNAT. Positions 820 to 834 are enriched in polar residues; it reads ENESQSLIPSPSVSE. A Phosphoserine modification is found at serine 843. 2 positions are modified to phosphoserine; by PKA: serine 869 and serine 905. An III repeat occupies 916-1224; it reads KGKIWQNIRK…RKQYRRLKKL (309 aa). Residues 935–953 traverse the membrane as a helical segment; sequence WFKCFIGLVTLLSTGTLAF. The Extracellular portion of the chain corresponds to 954–961; it reads EDIYMDQR. Residues 962–990 form a helical membrane-spanning segment; it reads KTIKILLEYADMIFTYIFILEMLLKWMAY. The Cytoplasmic segment spans residues 991–998; it reads GFKAYFSN. The chain crosses the membrane as a helical span at residues 999-1020; the sequence is GWYRLDFVVVIVFCLSLIGKTR. Residue glutamate 1021 is a topological domain, extracellular. Residues 1022–1040 traverse the membrane as a helical segment; the sequence is ELKPLISMKFLRPLRVLSQ. Residues 1041–1055 are Cytoplasmic-facing; it reads FERMKVVVRALIKTT. The helical transmembrane segment at 1056-1080 threads the bilayer; that stretch reads LPTLNVFLVCLMIWLIFSIMGVDLF. Topologically, residues 1081–1127 are extracellular; the sequence is AGRFYECIDPTSGERFPSSEVMNKSRCESLLFNESMLWENAKMNFDN. Cysteine 1087 and cysteine 1107 are oxidised to a cystine. 2 N-linked (GlcNAc...) asparagine glycosylation sites follow: asparagine 1103 and asparagine 1113. An intramembrane region (pore-forming) is located at residues 1128–1154; that stretch reads VGNGFLSLLQVATFNGWITIMNSAIDS. At 1155–1167 the chain is on the extracellular side; the sequence is VAVNIQPHFEVNI. A helical membrane pass occupies residues 1168–1202; it reads YMYCYFINFIIFGVFLPLSMLITVIIDNFNKHKIK. Topologically, residues 1203–1250 are cytoplasmic; sequence LGGSNIFITVKQRKQYRRLKKLMYEDSQRPVPRPLNKLQGFIFDVVTS. An IV repeat occupies 1233–1531; sequence VPRPLNKLQG…WKRFDPDRTQ (299 aa). Residues 1251–1272 form a helical membrane-spanning segment; it reads QAFNVIVMVLICFQAIAMMIDT. The Extracellular portion of the chain corresponds to 1273 to 1276; sequence DVQS. The helical transmembrane segment at 1277 to 1305 threads the bilayer; that stretch reads LQMSIALYWINSIFVMLYTMECILKLIAF. Residues 1306-1312 are Cytoplasmic-facing; it reads RCFYFTI. The chain crosses the membrane as a helical span at residues 1313–1338; sequence AWNIFDFMVVIFSITGLCLPMTVGSY. Over 1339–1341 the chain is Extracellular; it reads LVP. Residues 1342 to 1362 traverse the membrane as a helical segment; it reads PSLVQLILLSRIIHMLRLGKG. The Cytoplasmic segment spans residues 1363-1377; the sequence is PKVFHNLMLPLMLSL. Residues 1378-1402 form a helical membrane-spanning segment; sequence PALLNIILLIFLVMFIYAVFGMYNF. Residues 1403 to 1420 lie on the Extracellular side of the membrane; the sequence is AYVKKEAGINDVSNFETF. Positions 1421–1444 form an intramembrane region, pore-forming; that stretch reads GNSMLCLFQVAIFAGWDGMLDAIF. Residues 1445–1468 are Extracellular-facing; that stretch reads NSKWSDCDPDKINPGTQVRGDCGN. Cysteine 1451 and cysteine 1466 form a disulfide bridge. The helical transmembrane segment at 1469 to 1504 threads the bilayer; sequence PSVGIFYFVSYILISWLIIVNMYIVVVMEFLNIASK. At 1505–1682 the chain is on the cytoplasmic side; that stretch reads KKNKTLSEDD…KEKSPIQSQI (178 aa).

Belongs to the sodium channel (TC 1.A.1.10) family. SCN7A subfamily. As to quaternary structure, the sodium channel formed by SCN7A is probably a heterooligomeric complex consisting of the ion conducting pore forming alpha subunit SCN7A and regulatory beta subunits such as SCN3B. Interacts with ATP1A1; activates ATP1A1 and thereby indirectly signals to nearby neurons to regulate sodium homeostasis. Heart and uterus.

The protein resides in the cell membrane. The catalysed reaction is Na(+)(in) = Na(+)(out). Its function is as follows. Sodium leak channel functioning as an osmosensor regulating sodium ion levels in various tissues and organs. While most sodium channels are voltage-gated, SCN7A is not and lets sodium flow through membrane along its concentration gradient. In glial cells of the central nervous system, senses body-fluid sodium levels and controls salt intake behavior as well as voluntary water intake through activation of nearby neurons to maintain appropriate sodium levels in the body. By mediating sodium influx into keratinocytes, also plays a role in skin barrier homeostasis. In Homo sapiens (Human), this protein is Sodium channel protein type 7 subunit alpha.